Reading from the N-terminus, the 188-residue chain is Pyridoxal 5'-phosphate synthase subunit PdxT (188 aa).

Residue 46-48 (GES) participates in L-glutamine binding. Cysteine 78 (nucleophile) is an active-site residue. L-glutamine is bound by residues arginine 105 and 134-135 (IR). Active-site charge relay system residues include histidine 170 and glutamate 172.

Belongs to the glutaminase PdxT/SNO family. In the presence of PdxS, forms a dodecamer of heterodimers. Only shows activity in the heterodimer.

The enzyme catalyses aldehydo-D-ribose 5-phosphate + D-glyceraldehyde 3-phosphate + L-glutamine = pyridoxal 5'-phosphate + L-glutamate + phosphate + 3 H2O + H(+). It carries out the reaction L-glutamine + H2O = L-glutamate + NH4(+). The protein operates within cofactor biosynthesis; pyridoxal 5'-phosphate biosynthesis. Functionally, catalyzes the hydrolysis of glutamine to glutamate and ammonia as part of the biosynthesis of pyridoxal 5'-phosphate. The resulting ammonia molecule is channeled to the active site of PdxS. The sequence is that of Pyridoxal 5'-phosphate synthase subunit PdxT from Clostridium kluyveri (strain ATCC 8527 / DSM 555 / NBRC 12016 / NCIMB 10680 / K1).